The chain runs to 120 residues: Large ribosomal subunit protein uL18 (120 aa).

Over residues 1–10 (MKLNRVESTR) the composition is skewed to basic and acidic residues. Residues 1–26 (MKLNRVESTRSRHRRVRRKVGGTGDR) are disordered. Over residues 11 to 20 (SRHRRVRRKV) the composition is skewed to basic residues.

Belongs to the universal ribosomal protein uL18 family. As to quaternary structure, part of the 50S ribosomal subunit; part of the 5S rRNA/L5/L18/L25 subcomplex. Contacts the 5S and 23S rRNAs.

This is one of the proteins that bind and probably mediate the attachment of the 5S RNA into the large ribosomal subunit, where it forms part of the central protuberance. The protein is Large ribosomal subunit protein uL18 of Cyanothece sp. (strain PCC 7425 / ATCC 29141).